We begin with the raw amino-acid sequence, 95 residues long: Small ribosomal subunit protein bS6 (95 aa).

Belongs to the bacterial ribosomal protein bS6 family.

Its function is as follows. Binds together with bS18 to 16S ribosomal RNA. The chain is Small ribosomal subunit protein bS6 from Shouchella clausii (strain KSM-K16) (Alkalihalobacillus clausii).